We begin with the raw amino-acid sequence, 175 residues long: Microfibril-associated glycoprotein 3 (175 aa).

The Cytoplasmic segment spans residues 1-175 (FRTEGAEKLQ…KDGSFESCQL (175 aa)). Positions 85-175 (KERPALNAQD…KDGSFESCQL (91 aa)) are disordered. Residues 145–175 (QDSSHFSPPDDTGSTESNSNYKDGSFESCQL) show a composition bias toward polar residues.

Post-translationally, glycosylated.

The protein localises to the cell membrane. Functionally, component of the elastin-associated microfibrils. The chain is Microfibril-associated glycoprotein 3 (MFAP3) from Bos taurus (Bovine).